A 266-amino-acid chain; its full sequence is Glucosamine-6-phosphate deaminase 1 (266 aa).

Catalysis depends on D67, which acts as the Proton acceptor; for enolization step. The active-site For ring-opening step is N136. The Proton acceptor; for ring-opening step role is filled by H138. The active-site For ring-opening step is the E143.

The protein belongs to the glucosamine/galactosamine-6-phosphate isomerase family. As to quaternary structure, homohexamer.

It localises to the cytoplasm. The enzyme catalyses alpha-D-glucosamine 6-phosphate + H2O = beta-D-fructose 6-phosphate + NH4(+). Catalyzes the reversible conversion of alpha-D-glucosamine 6-phosphate (GlcN-6P) into beta-D-fructose 6-phosphate (Fru-6P) and ammonium ion, a regulatory reaction step in de novo uridine diphosphate-N-acetyl-alpha-D-glucosamine (UDP-GlcNAc) biosynthesis via hexosamine pathway. The chain is Glucosamine-6-phosphate deaminase 1 (GPI1) from Giardia intestinalis (Giardia lamblia).